A 321-amino-acid polypeptide reads, in one-letter code: Cytochrome c biogenesis protein CcsA (321 aa).

8 helical membrane passes run 17 to 37, 44 to 64, 71 to 91, 98 to 118, 143 to 163, 225 to 245, 258 to 275, and 286 to 306; these read IVSI…IVGL, GMIS…IYSG, LYES…IPYF, LSLV…SGLL, MVLS…LLVI, VISL…VWAN, ETWA…LHTR, and AIVA…VNLL.

The protein belongs to the CcmF/CycK/Ccl1/NrfE/CcsA family. May interact with Ccs1.

The protein localises to the plastid. The protein resides in the chloroplast thylakoid membrane. Its function is as follows. Required during biogenesis of c-type cytochromes (cytochrome c6 and cytochrome f) at the step of heme attachment. This Buxus microphylla (Littleleaf boxwood) protein is Cytochrome c biogenesis protein CcsA.